Reading from the N-terminus, the 435-residue chain is Apparent malate synthase (435 aa).

The Mg(2+) site is built by glutamate 159 and asparagine 180. Glutamate 159 lines the substrate pocket.

This sequence belongs to the HpcH/HpaI aldolase family. It depends on Mg(2+) as a cofactor. Mn(2+) is required as a cofactor. The cofactor is Co(2+). Requires Ca(2+) as cofactor.

It catalyses the reaction (S)-malyl-CoA = glyoxylate + acetyl-CoA. The enzyme catalyses (S)-malyl-CoA + H2O = (S)-malate + CoA + H(+). In terms of biological role, involved in the methylaspartate cycle. Catalyzes the biosynthesis of malate in two steps. In the first reaction acetyl-CoA is condensed reversibly with glyoxylate to form (S)-malyl-CoA. In the second reaction (S)-malyl-CoA is hydrolyzed to malate and CoA. It can also catalyze the condensation of propionyl-CoA with glyoxylate and of acetyl-CoA with pyruvate, however the CoA-ester hydrolysis reaction is highly specific for (S)-malyl-CoA. The chain is Apparent malate synthase (aceB) from Haloarcula marismortui (strain ATCC 43049 / DSM 3752 / JCM 8966 / VKM B-1809) (Halobacterium marismortui).